The following is a 154-amino-acid chain: Acidic phospholipase A2 1 (154 aa).

Positions 1 to 19 (MHPAHLLVLLGVCVSLLGA) are cleaved as a signal peptide. Positions 20–27 (ARIPPLPL) are excised as a propeptide. 7 disulfide bridges follow: Cys38–Cys104, Cys54–Cys153, Cys56–Cys72, Cys71–Cys132, Cys78–Cys125, Cys88–Cys118, and Cys111–Cys123. Positions 55, 57, and 59 each coordinate Ca(2+). His75 is an active-site residue. Ca(2+) is bound at residue Asp76. Residue Asp126 is part of the active site.

The protein belongs to the phospholipase A2 family. Group I subfamily. D49 sub-subfamily. As to quaternary structure, monomer. Requires Ca(2+) as cofactor. As to expression, expressed by the venom gland.

It localises to the secreted. It catalyses the reaction a 1,2-diacyl-sn-glycero-3-phosphocholine + H2O = a 1-acyl-sn-glycero-3-phosphocholine + a fatty acid + H(+). In terms of biological role, snake venom phospholipase A2 (PLA2) that shows moderate enzymatic activity and exhibits procoagulant activity. PLA2 catalyzes the calcium-dependent hydrolysis of the 2-acyl groups in 3-sn-phosphoglycerides. The chain is Acidic phospholipase A2 1 from Pseudonaja textilis (Eastern brown snake).